The sequence spans 455 residues: Serine--tRNA ligase (455 aa).

252-254 contributes to the L-serine binding site; sequence TAE. ATP is bound by residues 283–285 and V299; that span reads RKE. E306 is an L-serine binding site. ATP is bound at residue 370–373; sequence EVVS. T406 contacts L-serine.

Belongs to the class-II aminoacyl-tRNA synthetase family. Type-1 seryl-tRNA synthetase subfamily. Homodimer. The tRNA molecule binds across the dimer.

It is found in the cytoplasm. It catalyses the reaction tRNA(Ser) + L-serine + ATP = L-seryl-tRNA(Ser) + AMP + diphosphate + H(+). It carries out the reaction tRNA(Sec) + L-serine + ATP = L-seryl-tRNA(Sec) + AMP + diphosphate + H(+). It functions in the pathway aminoacyl-tRNA biosynthesis; selenocysteinyl-tRNA(Sec) biosynthesis; L-seryl-tRNA(Sec) from L-serine and tRNA(Sec): step 1/1. Its function is as follows. Catalyzes the attachment of serine to tRNA(Ser). Is also able to aminoacylate tRNA(Sec) with serine, to form the misacylated tRNA L-seryl-tRNA(Sec), which will be further converted into selenocysteinyl-tRNA(Sec). This chain is Serine--tRNA ligase, found in Pyrococcus abyssi (strain GE5 / Orsay).